Reading from the N-terminus, the 378-residue chain is UDP-N-acetylglucosamine 2-epimerase (378 aa).

His214 is an active-site residue.

The protein belongs to the UDP-N-acetylglucosamine 2-epimerase family.

It catalyses the reaction UDP-N-acetyl-alpha-D-glucosamine = UDP-N-acetyl-alpha-D-mannosamine. It participates in bacterial outer membrane biogenesis; LPS O-antigen biosynthesis. In Salmonella borreze, this protein is UDP-N-acetylglucosamine 2-epimerase (rfbC).